The following is a 208-amino-acid chain: ATP synthase subunit beta, chloroplastic (208 aa).

Belongs to the ATPase alpha/beta chains family. As to quaternary structure, F-type ATPases have 2 components, CF(1) - the catalytic core - and CF(0) - the membrane proton channel. CF(1) has five subunits: alpha(3), beta(3), gamma(1), delta(1), epsilon(1). CF(0) has four main subunits: a(1), b(1), b'(1) and c(9-12).

Its subcellular location is the plastid. It localises to the chloroplast thylakoid membrane. It carries out the reaction ATP + H2O + 4 H(+)(in) = ADP + phosphate + 5 H(+)(out). Its function is as follows. Produces ATP from ADP in the presence of a proton gradient across the membrane. The catalytic sites are hosted primarily by the beta subunits. The protein is ATP synthase subunit beta, chloroplastic (atpB) of Hypolepis hostilis (Fern).